A 125-amino-acid polypeptide reads, in one-letter code: Probable 4-amino-4-deoxy-L-arabinose-phosphoundecaprenol flippase subunit ArnF (125 aa).

Residues 1-2 (MG) lie on the Cytoplasmic side of the membrane. A helical transmembrane segment spans residues 3–23 (VMWGLISVAIASLAQLSLGFA). Residues 24-33 (MMRLPSIAHP) lie on the Periplasmic side of the membrane. Residues 34–54 (LAFISGLGAFNAATLALFAGL) traverse the membrane as a helical segment. The Cytoplasmic portion of the chain corresponds to 55–76 (AGYLVSVFCWQKTLHTLALSKA). A helical transmembrane segment spans residues 77 to 97 (YALLSLSYVLVWVASMLLPGL). Residues 98 to 100 (QGA) lie on the Periplasmic side of the membrane. Residues 101 to 121 (FSLKAMLGVLCIMAGVMLIFL) traverse the membrane as a helical segment. Residues 122–125 (PARS) are Cytoplasmic-facing.

It belongs to the ArnF family. As to quaternary structure, heterodimer of ArnE and ArnF.

The protein resides in the cell inner membrane. The protein operates within bacterial outer membrane biogenesis; lipopolysaccharide biosynthesis. Translocates 4-amino-4-deoxy-L-arabinose-phosphoundecaprenol (alpha-L-Ara4N-phosphoundecaprenol) from the cytoplasmic to the periplasmic side of the inner membrane. The sequence is that of Probable 4-amino-4-deoxy-L-arabinose-phosphoundecaprenol flippase subunit ArnF from Salmonella choleraesuis (strain SC-B67).